The chain runs to 953 residues: Probable LRR receptor-like serine/threonine-protein kinase At1g53420 (953 aa).

The N-terminal stretch at 1–22 (MSLNRFLFTSFSFFLFFIVHFA) is a signal peptide. Topologically, residues 23–566 (SSATLPTQEG…SPRNGMSTGT (544 aa)) are extracellular. 6 LRR repeats span residues 63–86 (WSTI…LVGL), 88–110 (LLQE…WGVL), 111–132 (PLVN…EFGN), 135–158 (TLTS…GNLP), 159–182 (NIQQ…AKLT), and 183–205 (TLRD…IQKW). N-linked (GlcNAc...) asparagine glycosylation is found at N100 and N132. Residues N265, N315, N335, N378, and N423 are each glycosylated (N-linked (GlcNAc...) asparagine). A helical transmembrane segment spans residues 567–587 (LHTLVVILSIFIVFLVFGTLW). Residues 588–953 (KKGYLRSKSQ…SDRSESSADH (366 aa)) are Cytoplasmic-facing. Residues 624–901 (FDSANRIGEG…VKMLEGKKMV (278 aa)) form the Protein kinase domain. Residues 630 to 638 (IGEGGFGPV) and K652 contribute to the ATP site. Y697 bears the Phosphotyrosine mark. D750 serves as the catalytic Proton acceptor. S783 bears the Phosphoserine mark. Residues T784 and T789 each carry the phosphothreonine modification. Y797 bears the Phosphotyrosine mark.

Belongs to the protein kinase superfamily. Ser/Thr protein kinase family.

It localises to the membrane. The catalysed reaction is L-seryl-[protein] + ATP = O-phospho-L-seryl-[protein] + ADP + H(+). It carries out the reaction L-threonyl-[protein] + ATP = O-phospho-L-threonyl-[protein] + ADP + H(+). This is Probable LRR receptor-like serine/threonine-protein kinase At1g53420 from Arabidopsis thaliana (Mouse-ear cress).